Reading from the N-terminus, the 484-residue chain is Chromosomal replication initiator protein DnaA (484 aa).

Positions 1–74 (MEKSKNIWSL…ILTKNGYNNV (74 aa)) are domain I, interacts with DnaA modulators. Residues 74 to 139 (VTIVFTNQPP…EEEPTNFKNP (66 aa)) form a domain II region. A domain III, AAA+ region region spans residues 140 to 356 (FLKKRYTFEN…AAVTKLKAYI (217 aa)). The ATP site is built by Gly-184, Gly-186, Lys-187, and Thr-188. Residues 357–484 (DLDNIEIDID…TELMNKIKKN (128 aa)) are domain IV, binds dsDNA.

This sequence belongs to the DnaA family. As to quaternary structure, oligomerizes as a right-handed, spiral filament on DNA at oriC.

The protein resides in the cytoplasm. Its function is as follows. Plays an essential role in the initiation and regulation of chromosomal replication. ATP-DnaA binds to the origin of replication (oriC) to initiate formation of the DNA replication initiation complex once per cell cycle. Binds the DnaA box (a 9 base pair repeat at the origin) and separates the double-stranded (ds)DNA. Forms a right-handed helical filament on oriC DNA; dsDNA binds to the exterior of the filament while single-stranded (ss)DNA is stabiized in the filament's interior. The ATP-DnaA-oriC complex binds and stabilizes one strand of the AT-rich DNA unwinding element (DUE), permitting loading of DNA polymerase. After initiation quickly degrades to an ADP-DnaA complex that is not apt for DNA replication. Binds acidic phospholipids. This chain is Chromosomal replication initiator protein DnaA, found in Borrelia garinii subsp. bavariensis (strain ATCC BAA-2496 / DSM 23469 / PBi) (Borreliella bavariensis).